We begin with the raw amino-acid sequence, 300 residues long: Glutamyl-Q tRNA(Asp) synthetase (300 aa).

Residues 8-12 and Glu-44 contribute to the L-glutamate site; that span reads RFAPS. The 'HIGH' region signature appears at 11-21; the sequence is PSPTGALHAGS. Residues Cys-100, Cys-102, Tyr-126, and Cys-130 each coordinate Zn(2+). The L-glutamate site is built by Tyr-190 and Arg-208. A 'KMSKS' region motif is present at residues 246–250; the sequence is KLSKQ. Lys-249 contributes to the ATP binding site.

The protein belongs to the class-I aminoacyl-tRNA synthetase family. GluQ subfamily. Zn(2+) is required as a cofactor.

In terms of biological role, catalyzes the tRNA-independent activation of glutamate in presence of ATP and the subsequent transfer of glutamate onto a tRNA(Asp). Glutamate is transferred on the 2-amino-5-(4,5-dihydroxy-2-cyclopenten-1-yl) moiety of the queuosine in the wobble position of the QUC anticodon. The chain is Glutamyl-Q tRNA(Asp) synthetase from Leptothrix cholodnii (strain ATCC 51168 / LMG 8142 / SP-6) (Leptothrix discophora (strain SP-6)).